Here is a 341-residue protein sequence, read N- to C-terminus: MKALSKLKPEEGIWMVDAPKPEVGHNDLLIKIRKTAICGTDVHIYNWDEWSQNTIPVPMVVGHEYVGEVVGMGQEVRGFTIGDRVSGEGHITCGHCRNCRGGRTHLCRNTSGVGVNREGAFAEYLVIPAFNAFKIPDDISDDLASIFDPFGNAVHTALSFDLVGEDVLITGAGPIGIMAAAVCRHVGARHVVITDVNEYRLELAQKMGATRAVNVAKEKLEDVMQELGMTEGFDVGLEMSGVPSAFHSMLDTMNHGGKIAMLGIPGGEMAIDWSKVIFKGLIIKGIYGREMFETWYKMASLIQSGLDISPIITHHFSIDEFQQGFDAMRSGQSGKVILNWD.

C38 is a binding site for Zn(2+). Residues T40 and H43 each act as charge relay system in the active site. 6 residues coordinate Zn(2+): H63, E64, C93, C96, C99, and C107. Residues I175, D195, R200, 262–264 (LGI), and 286–287 (IY) each bind NAD(+).

This sequence belongs to the zinc-containing alcohol dehydrogenase family. As to quaternary structure, homotetramer. Zn(2+) is required as a cofactor.

It localises to the cytoplasm. The enzyme catalyses L-threonine + NAD(+) = (2S)-2-amino-3-oxobutanoate + NADH + H(+). Its pathway is amino-acid degradation; L-threonine degradation via oxydo-reductase pathway; glycine from L-threonine: step 1/2. Functionally, catalyzes the NAD(+)-dependent oxidation of L-threonine to 2-amino-3-ketobutyrate. This is L-threonine 3-dehydrogenase from Shewanella halifaxensis (strain HAW-EB4).